A 283-amino-acid chain; its full sequence is Aldo-keto reductase MSMEG_2407/MSMEI_2346 (283 aa).

Tyr58 acts as the Proton donor in catalysis. The NADPH site is built by Gly196, Leu198, Val200, Ile236, Arg238, Ser239, Ala240, Arg244, Ser247, Asn248, and Arg274.

It belongs to the aldo/keto reductase family. As to quaternary structure, monomer.

Its activity is regulated as follows. Inhibited by the antituberculosis drug isoniazid (INH). Functionally, catalyzes the NADPH-dependent reduction of dicarbonyls. Exhibits narrow substrate specificity, with preferential activity against the dicarbonyl substrates phenylglyoxal and methylglyoxal. Exhibits weak activity with ethyl-2-methyl acetoacetate. Cannot use NADH. May play an important role in the detoxification of methylglyoxal. This Mycolicibacterium smegmatis (strain ATCC 700084 / mc(2)155) (Mycobacterium smegmatis) protein is Aldo-keto reductase MSMEG_2407/MSMEI_2346.